A 159-amino-acid polypeptide reads, in one-letter code: NADH-quinone oxidoreductase subunit I (159 aa).

2 consecutive 4Fe-4S ferredoxin-type domains span residues 51-80 (RRYE…IEAD) and 90-119 (TRYD…EGPN). 8 residues coordinate [4Fe-4S] cluster: cysteine 60, cysteine 63, cysteine 66, cysteine 70, cysteine 99, cysteine 102, cysteine 105, and cysteine 109.

Belongs to the complex I 23 kDa subunit family. In terms of assembly, NDH-1 is composed of 14 different subunits. Subunits NuoA, H, J, K, L, M, N constitute the membrane sector of the complex. Requires [4Fe-4S] cluster as cofactor.

The protein localises to the cell inner membrane. It catalyses the reaction a quinone + NADH + 5 H(+)(in) = a quinol + NAD(+) + 4 H(+)(out). Its function is as follows. NDH-1 shuttles electrons from NADH, via FMN and iron-sulfur (Fe-S) centers, to quinones in the respiratory chain. The immediate electron acceptor for the enzyme in this species is believed to be ubiquinone. Couples the redox reaction to proton translocation (for every two electrons transferred, four hydrogen ions are translocated across the cytoplasmic membrane), and thus conserves the redox energy in a proton gradient. This Rickettsia rickettsii (strain Sheila Smith) protein is NADH-quinone oxidoreductase subunit I.